The chain runs to 657 residues: MIESQEPVTFEDVAVDFTQEEWQQLNPAQKTLHRDVMLETYNHLVSVGCSGIKPDVIFKLEHGKDPWIIESELSRWIYPDRVKGLESSQQIISGELLFQREILERAPKDNSLYSVLKIWHIDNQMDRYQGNQDRVLRQVTVISRETLTDEMGSKYSAFGKMFNRCTDLAPLSQKFHKFDSCENSLKSNSDLLNYNRSYARKNPTKRFRCGRPPKYNASCSVPEKEGFIHTGMEPYGDSQCEKVLSHKQAHVQYKKFQAREKPNVCSMCGKAFIKKSQLIIHQRIHTGEKPYVCGDCRKAFSEKSHLIVHQRIHTGEKPYECTKYGRAFSRKSPFTVHQRVHTGEKPYECFECPKAFSQKSHLIIHQRVHTREKPFECSECRKAFCEMSHLFIHQITHTGKKPYECTECGKTFPRKTQLIIHQRTHTGEKPYKCGECGKTFCQQSHLIGHQRIHTGEKPYVCTDCGKAFSQKSHLTGHQRLHTGEKPYMCTECGKSFSQKSPLIIHQRIHTGEKPYQCGECGKTFSQKSLLIIHLRVHTGEKPYECTECGRAFSLKSHLILHQRGHTGEKPYECSECGKAFCGKSPLIIHQKTHPREKTPECAESGMTFFWKSQMITYQRRHTGEKPSRCSDCGKAFCQHVYFTGHQNPYRKDTLYIC.

The KRAB domain maps to 8 to 79 (VTFEDVAVDF…ESELSRWIYP (72 aa)). 2 C2H2-type zinc fingers span residues 263–285 (NVCS…QRIH) and 291–313 (YVCG…QRIH). Residues 319-341 (YECTKYGRAFSRKSPFTVHQRVH) form a C2H2-type 3; degenerate zinc finger. 9 consecutive C2H2-type zinc fingers follow at residues 347–369 (YECF…QRVH), 375–397 (FECS…QITH), 403–425 (YECT…QRTH), 431–453 (YKCG…QRIH), 459–481 (YVCT…QRLH), 487–509 (YMCT…QRIH), 515–537 (YQCG…LRVH), 543–565 (YECT…QRGH), and 571–593 (YECS…QKTH). The C2H2-type 13; degenerate zinc finger occupies 599 to 621 (PECAESGMTFFWKSQMITYQRRH). The C2H2-type 14; degenerate zinc-finger motif lies at 627–649 (SRCSDCGKAFCQHVYFTGHQNPY).

It belongs to the krueppel C2H2-type zinc-finger protein family.

It localises to the nucleus. Its function is as follows. May be involved in transcriptional regulation. The sequence is that of Zinc finger protein 630 (ZNF630) from Homo sapiens (Human).